A 23-amino-acid chain; its full sequence is Magainin-R2 (23 aa).

Expressed by the skin glands.

It localises to the secreted. Its function is as follows. Antimicrobial peptide. This Xenopus ruwenzoriensis (Uganda clawed frog) protein is Magainin-R2.